Reading from the N-terminus, the 565-residue chain is Oxygen-dependent choline dehydrogenase (565 aa).

6–35 (DYIIIGAGSAGNVLATRLTEDADVSVLLLE) contributes to the FAD binding site. H475 serves as the catalytic Proton acceptor. The disordered stretch occupies residues 541–565 (RSNAPYFVAGERPVRGQPQRAVSAA).

This sequence belongs to the GMC oxidoreductase family. Requires FAD as cofactor.

It catalyses the reaction choline + A = betaine aldehyde + AH2. The enzyme catalyses betaine aldehyde + NAD(+) + H2O = glycine betaine + NADH + 2 H(+). Its pathway is amine and polyamine biosynthesis; betaine biosynthesis via choline pathway; betaine aldehyde from choline (cytochrome c reductase route): step 1/1. Functionally, involved in the biosynthesis of the osmoprotectant glycine betaine. Catalyzes the oxidation of choline to betaine aldehyde and betaine aldehyde to glycine betaine at the same rate. The polypeptide is Oxygen-dependent choline dehydrogenase (Ectopseudomonas mendocina (strain ymp) (Pseudomonas mendocina)).